Consider the following 368-residue polypeptide: uncharacterized protein (368 aa).

The protein belongs to the YCR102c/YLR460c/YNL134c family.

This is an uncharacterized protein from Saccharomyces cerevisiae (strain ATCC 204508 / S288c) (Baker's yeast).